Here is a 101-residue protein sequence, read N- to C-terminus: Large ribosomal subunit protein uL24 (101 aa).

Belongs to the universal ribosomal protein uL24 family. As to quaternary structure, part of the 50S ribosomal subunit.

One of two assembly initiator proteins, it binds directly to the 5'-end of the 23S rRNA, where it nucleates assembly of the 50S subunit. Functionally, one of the proteins that surrounds the polypeptide exit tunnel on the outside of the subunit. This is Large ribosomal subunit protein uL24 from Streptococcus pyogenes serotype M2 (strain MGAS10270).